A 363-amino-acid polypeptide reads, in one-letter code: UDP-N-acetylglucosamine--N-acetylmuramyl-(pentapeptide) pyrophosphoryl-undecaprenol N-acetylglucosamine transferase (363 aa).

Residues 10-12 (TAG), Asn124, Arg161, Ser195, and Gln291 each bind UDP-N-acetyl-alpha-D-glucosamine.

This sequence belongs to the glycosyltransferase 28 family. MurG subfamily.

It is found in the cell membrane. It carries out the reaction di-trans,octa-cis-undecaprenyl diphospho-N-acetyl-alpha-D-muramoyl-L-alanyl-D-glutamyl-meso-2,6-diaminopimeloyl-D-alanyl-D-alanine + UDP-N-acetyl-alpha-D-glucosamine = di-trans,octa-cis-undecaprenyl diphospho-[N-acetyl-alpha-D-glucosaminyl-(1-&gt;4)]-N-acetyl-alpha-D-muramoyl-L-alanyl-D-glutamyl-meso-2,6-diaminopimeloyl-D-alanyl-D-alanine + UDP + H(+). The protein operates within cell wall biogenesis; peptidoglycan biosynthesis. Functionally, cell wall formation. Catalyzes the transfer of a GlcNAc subunit on undecaprenyl-pyrophosphoryl-MurNAc-pentapeptide (lipid intermediate I) to form undecaprenyl-pyrophosphoryl-MurNAc-(pentapeptide)GlcNAc (lipid intermediate II). This chain is UDP-N-acetylglucosamine--N-acetylmuramyl-(pentapeptide) pyrophosphoryl-undecaprenol N-acetylglucosamine transferase, found in Streptomyces avermitilis (strain ATCC 31267 / DSM 46492 / JCM 5070 / NBRC 14893 / NCIMB 12804 / NRRL 8165 / MA-4680).